The chain runs to 436 residues: Methionine aminopeptidase 2 (436 aa).

The segment at 1 to 61 is disordered; sequence MSEIQPKTEV…KKKKAAPVAS (61 aa). Residues 16-26 are compositionally biased toward acidic residues; that stretch reads EEEEESDDEED. Over residues 44-56 the composition is skewed to basic residues; the sequence is KKKKKKNKKKKKA. His-191 contacts substrate. Positions 211, 222, and 291 each coordinate a divalent metal cation. Residue His-299 coordinates substrate. Glu-324 and Glu-417 together coordinate a divalent metal cation.

Belongs to the peptidase M24A family. Methionine aminopeptidase eukaryotic type 2 subfamily. Requires Co(2+) as cofactor. It depends on Zn(2+) as a cofactor. The cofactor is Mn(2+). Fe(2+) serves as cofactor.

The protein resides in the cytoplasm. It carries out the reaction Release of N-terminal amino acids, preferentially methionine, from peptides and arylamides.. Functionally, cotranslationally removes the N-terminal methionine from nascent proteins. The N-terminal methionine is often cleaved when the second residue in the primary sequence is small and uncharged (Met-Ala-, Cys, Gly, Pro, Ser, Thr, or Val). In Dictyostelium discoideum (Social amoeba), this protein is Methionine aminopeptidase 2 (metap2).